Consider the following 326-residue polypeptide: Vitamin B12 import system permease protein BtuC (326 aa).

9 consecutive transmembrane segments (helical) span residues 13–35, 55–77, 90–107, 111–133, 146–168, 188–205, 242–264, 274–296, and 303–322; these read IRWL…CAGE, IRLP…GAVM, LLGV…AVLL, QLPN…LILL, LLAG…YFST, WRQS…LWIC, MVGV…PHIL, VLLP…VARL, and LPIG…WLLL.

This sequence belongs to the binding-protein-dependent transport system permease family. FecCD subfamily. In terms of assembly, the complex is composed of two ATP-binding proteins (BtuD), two transmembrane proteins (BtuC) and a solute-binding protein (BtuF).

Its subcellular location is the cell inner membrane. Its function is as follows. Part of the ABC transporter complex BtuCDF involved in vitamin B12 import. Involved in the translocation of the substrate across the membrane. The chain is Vitamin B12 import system permease protein BtuC from Shigella flexneri.